The following is a 306-amino-acid chain: Transcription initiation factor IIB 2 (306 aa).

A TFIIB-type zinc finger spans residues 6–37; sequence PKRVCPICGSTEFIYDPRRGEIVCAKCGYVIE. Zn(2+)-binding residues include cysteine 10, cysteine 13, cysteine 29, and cysteine 32. Repeat copies occupy residues 123-206 and 217-298.

Belongs to the TFIIB family.

Stabilizes TBP binding to an archaeal box-A promoter. Also responsible for recruiting RNA polymerase II to the pre-initiation complex (DNA-TBP-TFIIB). The protein is Transcription initiation factor IIB 2 of Thermococcus kodakarensis (strain ATCC BAA-918 / JCM 12380 / KOD1) (Pyrococcus kodakaraensis (strain KOD1)).